A 262-amino-acid polypeptide reads, in one-letter code: Type III pantothenate kinase (262 aa).

9-16 is a binding site for ATP; sequence DAGNSRIK. Residues Tyr96 and 103–106 contribute to the substrate site; that span reads GSDR. Catalysis depends on Asp105, which acts as the Proton acceptor. Thr129 serves as a coordination point for ATP. Thr189 provides a ligand contact to substrate.

Belongs to the type III pantothenate kinase family. Homodimer. NH4(+) serves as cofactor. It depends on K(+) as a cofactor.

The protein resides in the cytoplasm. The catalysed reaction is (R)-pantothenate + ATP = (R)-4'-phosphopantothenate + ADP + H(+). Its pathway is cofactor biosynthesis; coenzyme A biosynthesis; CoA from (R)-pantothenate: step 1/5. In terms of biological role, catalyzes the phosphorylation of pantothenate (Pan), the first step in CoA biosynthesis. This Burkholderia vietnamiensis (strain G4 / LMG 22486) (Burkholderia cepacia (strain R1808)) protein is Type III pantothenate kinase.